The primary structure comprises 103 residues: Large ribosomal subunit protein bL28 (103 aa).

It belongs to the bacterial ribosomal protein bL28 family.

The chain is Large ribosomal subunit protein bL28 from Anaplasma marginale (strain St. Maries).